The sequence spans 293 residues: Bifunctional protein FolD (293 aa).

NADP(+)-binding positions include G164 to S166, S193, and T234.

Belongs to the tetrahydrofolate dehydrogenase/cyclohydrolase family. In terms of assembly, homodimer.

It carries out the reaction (6R)-5,10-methylene-5,6,7,8-tetrahydrofolate + NADP(+) = (6R)-5,10-methenyltetrahydrofolate + NADPH. It catalyses the reaction (6R)-5,10-methenyltetrahydrofolate + H2O = (6R)-10-formyltetrahydrofolate + H(+). It functions in the pathway one-carbon metabolism; tetrahydrofolate interconversion. Functionally, catalyzes the oxidation of 5,10-methylenetetrahydrofolate to 5,10-methenyltetrahydrofolate and then the hydrolysis of 5,10-methenyltetrahydrofolate to 10-formyltetrahydrofolate. This Azobacteroides pseudotrichonymphae genomovar. CFP2 protein is Bifunctional protein FolD.